Reading from the N-terminus, the 145-residue chain is Ribonuclease VapC48 (145 aa).

Mg(2+) is bound by residues Asp-6 and Asp-109. Residues 15-141 form the PINc domain; it reads HRASPFHDKA…RKFEGIRIRD (127 aa).

This sequence belongs to the PINc/VapC protein family. Requires Mg(2+) as cofactor.

Toxic component of a type II toxin-antitoxin (TA) system. An RNase. Its cognate antitoxin is VapB48. This Mycobacterium tuberculosis (strain CDC 1551 / Oshkosh) protein is Ribonuclease VapC48.